The chain runs to 548 residues: Fumarate hydratase class I, anaerobic (548 aa).

Residue C105 participates in [4Fe-4S] cluster binding. Residue K192 is modified to N6-acetyllysine. Residues C224 and C318 each coordinate [4Fe-4S] cluster.

Belongs to the class-I fumarase family. Homodimer. [4Fe-4S] cluster serves as cofactor.

It carries out the reaction (S)-malate = fumarate + H2O. The catalysed reaction is (S,S)-tartrate = oxaloacetate + H2O. Catalyzes the reversible hydration of fumarate to (S)-malate. Functions in the generation of fumarate for use as an anaerobic electron acceptor. To a lesser extent, also displays D-tartrate dehydratase activity, but is not able to convert (R)-malate, L-tartrate or meso-tartrate. Is required for anaerobic growth on D-tartrate. This chain is Fumarate hydratase class I, anaerobic, found in Escherichia coli (strain K12).